Consider the following 206-residue polypeptide: Transcription factor MYB57 (206 aa).

Over residues M1–V11 the composition is skewed to basic residues. The interval M1–E20 is disordered. HTH myb-type domains lie at E22–L74 and R75–M129. 2 DNA-binding regions (H-T-H motif) span residues W50–L74 and W102–I125. Residues N138–I162 form a disordered region. Residues S144 to G159 are compositionally biased toward low complexity.

In terms of tissue distribution, expressed specifically in flowers.

The protein resides in the nucleus. Transcription factor acting redundantly with MYB21 and MYB24 to control stamen filament elongation in the late developed flowers. Repressed at the transcript levels by DELLA proteins. The chain is Transcription factor MYB57 (MYB57) from Arabidopsis thaliana (Mouse-ear cress).